The primary structure comprises 584 residues: DNA mismatch repair protein MutL (584 aa).

This sequence belongs to the DNA mismatch repair MutL/HexB family.

In terms of biological role, this protein is involved in the repair of mismatches in DNA. It is required for dam-dependent methyl-directed DNA mismatch repair. May act as a 'molecular matchmaker', a protein that promotes the formation of a stable complex between two or more DNA-binding proteins in an ATP-dependent manner without itself being part of a final effector complex. The sequence is that of DNA mismatch repair protein MutL from Syntrophomonas wolfei subsp. wolfei (strain DSM 2245B / Goettingen).